The sequence spans 201 residues: MTAPVIGVLALQGDVREHTAALAAAGADARPVRRPKELETVDGLVIPGGESTTISRLVDLFELREPIDKRIADGMPVYGSCAGMIMLASEVLDGRSDQRGFAGIEMTVRRNAFGRQIASFEAPVSMAGIDGDPLHVLFIRAPWVERVGRGVEVLGTVAEGPAAGRIVAVRQGNLLATSFHPELTDDRRLHAYFADLVRAAI.

49-51 (GES) lines the L-glutamine pocket. Cys-81 (nucleophile) is an active-site residue. L-glutamine is bound by residues Arg-110 and 139 to 140 (IR). Residues His-180 and Glu-182 each act as charge relay system in the active site.

Belongs to the glutaminase PdxT/SNO family. As to quaternary structure, in the presence of PdxS, forms a dodecamer of heterodimers. Only shows activity in the heterodimer.

The catalysed reaction is aldehydo-D-ribose 5-phosphate + D-glyceraldehyde 3-phosphate + L-glutamine = pyridoxal 5'-phosphate + L-glutamate + phosphate + 3 H2O + H(+). It catalyses the reaction L-glutamine + H2O = L-glutamate + NH4(+). The protein operates within cofactor biosynthesis; pyridoxal 5'-phosphate biosynthesis. Catalyzes the hydrolysis of glutamine to glutamate and ammonia as part of the biosynthesis of pyridoxal 5'-phosphate. The resulting ammonia molecule is channeled to the active site of PdxS. The sequence is that of Pyridoxal 5'-phosphate synthase subunit PdxT from Salinispora tropica (strain ATCC BAA-916 / DSM 44818 / JCM 13857 / NBRC 105044 / CNB-440).